The primary structure comprises 62 residues: Calmodulin regulator protein PCP4 (62 aa).

Positions 1–39 (MSERQSAGATNGKDKTSGDNDGQKKVQEEFDIDMDAPET) are disordered. Positions 12–28 (GKDKTSGDNDGQKKVQE) are enriched in basic and acidic residues. Residues 28 to 40 (EEFDIDMDAPETE) are acidic; binds calcium and is required for modulating the calcium-binding kinetics of calmodulin. Residues 39-62 (TERAAVAIQSQFRKFQKKKAGSQS) form the IQ domain.

The protein belongs to the PCP4 family. As to quaternary structure, binds to both calcium-free and calcium-bound calmodulin. The affinity for the calcium-bound form is 50-fold greater.

Its function is as follows. Functions as a modulator of calcium-binding by calmodulin. Thereby, regulates calmodulin activity and the different processes it controls. For instance, may play a role in neuronal differentiation through activation of calmodulin-dependent kinase signaling pathways. The protein is Calmodulin regulator protein PCP4 of Mus musculus (Mouse).